The sequence spans 423 residues: Mannose-6-phosphate isomerase (423 aa).

The residue at position 2 (A2) is an N-acetylalanine. Residues S102 and S108 each carry the phosphoserine modification. Zn(2+) is bound by residues Q110, H112, E137, and H276. R295 is a catalytic residue.

The protein belongs to the mannose-6-phosphate isomerase type 1 family. The cofactor is Zn(2+).

The protein localises to the cytoplasm. It carries out the reaction D-mannose 6-phosphate = D-fructose 6-phosphate. Its pathway is nucleotide-sugar biosynthesis; GDP-alpha-D-mannose biosynthesis; alpha-D-mannose 1-phosphate from D-fructose 6-phosphate: step 1/2. In terms of biological role, isomerase that catalyzes the interconversion of fructose-6-P and mannose-6-P and has a critical role in the supply of D-mannose derivatives required for many eukaryotic glycosylation reactions. This is Mannose-6-phosphate isomerase from Rattus norvegicus (Rat).